The chain runs to 167 residues: Large ribosomal subunit protein uL23 (167 aa).

Residues 1–130 (MNVNEIIKGP…ELEAKNKEIA (130 aa)) are large ribosomal subunit protein uL23. Disordered stretches follow at residues 91–112 (FEDESPQDQKDSETISENTDEK) and 137–167 (QAELAKKESETNENQEKKIENQTENQENSAK). 2 stretches are compositionally biased toward basic and acidic residues: residues 97 to 112 (QDQKDSETISENTDEK) and 137 to 157 (QAELAKKESETNENQEKKIEN). The unknown stretch occupies residues 131 to 167 (EKLAKKQAELAKKESETNENQEKKIENQTENQENSAK). The span at 158-167 (QTENQENSAK) shows a compositional bias: polar residues.

The protein belongs to the universal ribosomal protein uL23 family. As to quaternary structure, part of the 50S ribosomal subunit. Contacts protein L29, and trigger factor when it is bound to the ribosome.

Its function is as follows. One of the early assembly proteins it binds 23S rRNA. One of the proteins that surrounds the polypeptide exit tunnel on the outside of the ribosome. Forms the main docking site for trigger factor binding to the ribosome. The chain is Large ribosomal subunit protein uL23 from Mesomycoplasma hyopneumoniae (strain 7448) (Mycoplasma hyopneumoniae).